Consider the following 223-residue polypeptide: Pyridoxine/pyridoxamine 5'-phosphate oxidase (223 aa).

Substrate contacts are provided by residues 9–12 and lysine 76; that span reads RVGY. Residues 71 to 76, 86 to 87, lysine 93, and glutamine 115 contribute to the FMN site; these read RTVLCK and FT. Substrate-binding residues include tyrosine 133, arginine 137, and serine 141. Residues 150 to 151 and tryptophan 196 contribute to the FMN site; that span reads QS. Residue 202-204 participates in substrate binding; it reads RMH. An FMN-binding site is contributed by arginine 206.

This sequence belongs to the pyridoxamine 5'-phosphate oxidase family. Homodimer. The cofactor is FMN.

The catalysed reaction is pyridoxamine 5'-phosphate + O2 + H2O = pyridoxal 5'-phosphate + H2O2 + NH4(+). The enzyme catalyses pyridoxine 5'-phosphate + O2 = pyridoxal 5'-phosphate + H2O2. It participates in cofactor metabolism; pyridoxal 5'-phosphate salvage; pyridoxal 5'-phosphate from pyridoxamine 5'-phosphate: step 1/1. The protein operates within cofactor metabolism; pyridoxal 5'-phosphate salvage; pyridoxal 5'-phosphate from pyridoxine 5'-phosphate: step 1/1. Functionally, catalyzes the oxidation of either pyridoxine 5'-phosphate (PNP) or pyridoxamine 5'-phosphate (PMP) into pyridoxal 5'-phosphate (PLP). The polypeptide is Pyridoxine/pyridoxamine 5'-phosphate oxidase (Rhodococcus jostii (strain RHA1)).